The primary structure comprises 463 residues: L-seryl-tRNA(Sec) selenium transferase (463 aa).

K294 is modified (N6-(pyridoxal phosphate)lysine).

The protein belongs to the SelA family. The cofactor is pyridoxal 5'-phosphate.

The protein resides in the cytoplasm. The enzyme catalyses L-seryl-tRNA(Sec) + selenophosphate + H(+) = L-selenocysteinyl-tRNA(Sec) + phosphate. It participates in aminoacyl-tRNA biosynthesis; selenocysteinyl-tRNA(Sec) biosynthesis; selenocysteinyl-tRNA(Sec) from L-seryl-tRNA(Sec) (bacterial route): step 1/1. Converts seryl-tRNA(Sec) to selenocysteinyl-tRNA(Sec) required for selenoprotein biosynthesis. The protein is L-seryl-tRNA(Sec) selenium transferase of Hyphomonas neptunium (strain ATCC 15444).